The sequence spans 661 residues: UvrABC system protein B (661 aa).

The 387-residue stretch at 28 to 414 folds into the Helicase ATP-binding domain; the sequence is DGVNEGKRHQ…HTDEMVEQII (387 aa). 41–48 contributes to the ATP binding site; sequence GATGTGKT. A Beta-hairpin motif is present at residues 94-117; the sequence is YYDYYQPEAYVPSTDTFIEKDASI. Residues 432–598 form the Helicase C-terminal domain; it reads QIDDLLSEIQ…TINKKIHDVI (167 aa). The tract at residues 603 to 624 is disordered; the sequence is ESDETNQQQQTELPKKMTKKER. The 36-residue stretch at 625 to 660 folds into the UVR domain; that stretch reads QKTIENIEKEMKKAAKDLDFEKATELRDMLFELKAE.

Belongs to the UvrB family. Forms a heterotetramer with UvrA during the search for lesions. Interacts with UvrC in an incision complex.

Its subcellular location is the cytoplasm. Its function is as follows. The UvrABC repair system catalyzes the recognition and processing of DNA lesions. A damage recognition complex composed of 2 UvrA and 2 UvrB subunits scans DNA for abnormalities. Upon binding of the UvrA(2)B(2) complex to a putative damaged site, the DNA wraps around one UvrB monomer. DNA wrap is dependent on ATP binding by UvrB and probably causes local melting of the DNA helix, facilitating insertion of UvrB beta-hairpin between the DNA strands. Then UvrB probes one DNA strand for the presence of a lesion. If a lesion is found the UvrA subunits dissociate and the UvrB-DNA preincision complex is formed. This complex is subsequently bound by UvrC and the second UvrB is released. If no lesion is found, the DNA wraps around the other UvrB subunit that will check the other stand for damage. The sequence is that of UvrABC system protein B from Staphylococcus epidermidis (strain ATCC 35984 / DSM 28319 / BCRC 17069 / CCUG 31568 / BM 3577 / RP62A).